Reading from the N-terminus, the 657-residue chain is DNA ligase (657 aa).

Serine 80–leucine 81 is an NAD(+) binding site. The active-site N6-AMP-lysine intermediate is lysine 104. NAD(+)-binding residues include arginine 125, glutamate 159, and lysine 297. The Zn(2+) site is built by cysteine 386, cysteine 389, cysteine 406, and cysteine 411. In terms of domain architecture, BRCT spans glutamine 571 to glutamate 657.

The protein belongs to the NAD-dependent DNA ligase family. LigA subfamily. Mg(2+) is required as a cofactor. It depends on Mn(2+) as a cofactor.

It carries out the reaction NAD(+) + (deoxyribonucleotide)n-3'-hydroxyl + 5'-phospho-(deoxyribonucleotide)m = (deoxyribonucleotide)n+m + AMP + beta-nicotinamide D-nucleotide.. Its function is as follows. DNA ligase that catalyzes the formation of phosphodiester linkages between 5'-phosphoryl and 3'-hydroxyl groups in double-stranded DNA using NAD as a coenzyme and as the energy source for the reaction. It is essential for DNA replication and repair of damaged DNA. The sequence is that of DNA ligase from Ruminiclostridium cellulolyticum (strain ATCC 35319 / DSM 5812 / JCM 6584 / H10) (Clostridium cellulolyticum).